Here is a 230-residue protein sequence, read N- to C-terminus: Urease accessory protein UreF (230 aa).

This sequence belongs to the UreF family. UreD, UreF and UreG form a complex that acts as a GTP-hydrolysis-dependent molecular chaperone, activating the urease apoprotein by helping to assemble the nickel containing metallocenter of UreC. The UreE protein probably delivers the nickel.

It is found in the cytoplasm. Functionally, required for maturation of urease via the functional incorporation of the urease nickel metallocenter. This Polynucleobacter asymbioticus (strain DSM 18221 / CIP 109841 / QLW-P1DMWA-1) (Polynucleobacter necessarius subsp. asymbioticus) protein is Urease accessory protein UreF.